An 887-amino-acid chain; its full sequence is Amyloid-beta-like protein (887 aa).

Residues 1 to 27 (MCAALRRNLLLRSLWVVLAIGTAQVQA) form the signal peptide. Residues 28 to 813 (ASPRWEPQIA…HAAKEGRNVY (786 aa)) lie on the Extracellular side of the membrane. The GFLD subdomain stretch occupies residues 30–133 (PRWEPQIAVL…KPFRCLGPFQ (104 aa)). In terms of domain architecture, E1 spans 30–199 (PRWEPQIAVL…SGVEFVCCPK (170 aa)). 6 disulfides stabilise this stretch: cysteine 40–cysteine 70, cysteine 81–cysteine 128, cysteine 106–cysteine 116, cysteine 143–cysteine 197, cysteine 154–cysteine 184, and cysteine 168–cysteine 196. The segment at 141–199 (EGCLFDHIHNASRCWPFVRWNQTGAAACQERGMQMRSFAMLLPCGISVFSGVEFVCCPK) is cuBD subdomain. Residues asparagine 150 and asparagine 161 are each glycosylated (N-linked (GlcNAc...) asparagine). Disordered regions lie at residues 225 to 365 (NDEL…STPQ) and 377 to 396 (NSGN…QPTS). N-linked (GlcNAc...) asparagine glycans are attached at residues asparagine 237 and asparagine 240. The segment covering 246 to 267 (NEDDLDDEDDLMGDDEEDDMVA) has biased composition (acidic residues). Over residues 268–292 (DEAATAGGSPNTGSSGDSNSGSLDD) the composition is skewed to low complexity. A compositionally biased stretch (acidic residues) spans 293–321 (INAEYDSGEEGDNYEEDGAGSESEAEVEA). Low complexity predominate over residues 329–352 (AKVVSLKSDSSSPSSAPVAPAPEK). The E2 domain occupies 395–597 (TSDPYFTHFD…AKIAQLMNDY (203 aa)). N-linked (GlcNAc...) asparagine glycosylation is present at asparagine 574. Positions 675-743 (KSQVAEQQSQ…TEYGEATVSS (69 aa)) are disordered. Residues 681 to 699 (QQSQPTQSSTQSQAQQQQQ) are compositionally biased toward low complexity. The helical transmembrane segment at 814–834 (FTLSFAGIALMAAVFVGVAVA) threads the bilayer. At 835–887 (KWRTSRSPHAQGFIEVDQNVTTHHPIVREEKIVPNMQINGYENPTYKYFEVKE) the chain is on the cytoplasmic side. The YENPXY motif signature appears at 875 to 880 (YENPTY).

This sequence belongs to the APP family. Interacts (via the intracellular domain, ICD) with APP-BP1. In terms of tissue distribution, expressed in postmitotic neurons in the central and peripheral nervous systems. Within the nervous system, transcripts are not observed in neuroblasts, newly generated neurons and at least one class of presumed glial cells.

The protein resides in the membrane. In terms of biological role, during development, plays a role in the regulation of the neddylation pathway. Appl and APP-BP1 interact antagonistically during development. The chain is Amyloid-beta-like protein (Appl) from Drosophila melanogaster (Fruit fly).